Reading from the N-terminus, the 98-residue chain is Serine rich endogenous peptide 10 (98 aa).

The N-terminal stretch at 1 to 29 (MERKKFSSKFIHLLIVFLLLCTFLSRTES) is a signal peptide. Residues 50-98 (NSAIGTPSSTSDHAPGSNGRKLMSIYRPNGDIFTGPSGSGHGGGRTPAP) form a disordered region. Positions 52–61 (AIGTPSSTSD) are enriched in polar residues. Short sequence motifs (SCOOP motif) lie at residues 52–66 (AIGT…APGS) and 80–94 (DIFT…GGGR). 2 consecutive short sequence motifs (sxS motif essential for MIK2 binding) follow at residues 58–60 (STS) and 86–88 (SGS). The segment covering 86–98 (SGSGHGGGRTPAP) has biased composition (gly residues).

The protein belongs to the serine rich endogenous peptide (SCOOP) phytocytokine family. Interacts with MIK2 (via extracellular leucine-rich repeat domain); this interaction triggers the formation of complex between MIK2 and the BAK1/SERK3 and SERK4 coreceptors, and subsequent BAK1 activation by phosphorylation. Mostly expressed in leaves and seedlings shoots, to a lower extent, in roots, but barely in flowers.

The protein localises to the cell membrane. The protein resides in the secreted. Its subcellular location is the extracellular space. It is found in the apoplast. Functionally, brassicaceae-specific phytocytokine (plant endogenous peptide released into the apoplast) perceived by MIK2 in a BAK1/SERK3 and SERK4 coreceptors-dependent manner, that modulates various physiological and antimicrobial processes including growth prevention and reactive oxygen species (ROS) response regulation. Inhibits root growth and regulates root meristems. Promotes ROS production and MAPK (e.g. MPK3, MPK4 and MPK6) activation in a MIK2-dependent manner, thus leading to the up-regulation of immune-related marker genes (e.g. WRKY30, WRKY33 and CYP81F2). The chain is Serine rich endogenous peptide 10 from Arabidopsis thaliana (Mouse-ear cress).